Consider the following 337-residue polypeptide: Protein RecA (337 aa).

66–73 (GPESSGKT) contacts ATP.

This sequence belongs to the RecA family.

The protein localises to the cytoplasm. In terms of biological role, can catalyze the hydrolysis of ATP in the presence of single-stranded DNA, the ATP-dependent uptake of single-stranded DNA by duplex DNA, and the ATP-dependent hybridization of homologous single-stranded DNAs. It interacts with LexA causing its activation and leading to its autocatalytic cleavage. In Mesomycoplasma hyopneumoniae (strain 232) (Mycoplasma hyopneumoniae), this protein is Protein RecA.